Consider the following 179-residue polypeptide: Ribosome maturation factor RimP (179 aa).

The protein belongs to the RimP family.

It localises to the cytoplasm. Functionally, required for maturation of 30S ribosomal subunits. This is Ribosome maturation factor RimP from Prosthecochloris aestuarii (strain DSM 271 / SK 413).